The chain runs to 746 residues: Polyribonucleotide nucleotidyltransferase (746 aa).

The Mg(2+) site is built by Asp-515 and Asp-521. The KH domain maps to 581–640; that stretch reads PRVIAVKIPVDKIGEVIGPKGKMINQIQEDTGADISIEDDGTVYIGATNGPSADAARSAI. The S1 motif domain occupies 652–724; it reads GERYLGTVVK…DRGKLSLSPV (73 aa).

It belongs to the polyribonucleotide nucleotidyltransferase family. Mg(2+) serves as cofactor.

Its subcellular location is the cytoplasm. The catalysed reaction is RNA(n+1) + phosphate = RNA(n) + a ribonucleoside 5'-diphosphate. In terms of biological role, involved in mRNA degradation. Catalyzes the phosphorolysis of single-stranded polyribonucleotides processively in the 3'- to 5'-direction. The sequence is that of Polyribonucleotide nucleotidyltransferase from Renibacterium salmoninarum (strain ATCC 33209 / DSM 20767 / JCM 11484 / NBRC 15589 / NCIMB 2235).